The sequence spans 224 residues: NADH-quinone oxidoreductase subunit B (224 aa).

[4Fe-4S] cluster is bound by residues Cys-67, Cys-68, Cys-133, and Cys-162. Positions 200–224 are disordered; that stretch reads DMPAEKDRKRGERIKVTNLRTPDEI. The span at 201–224 shows a compositional bias: basic and acidic residues; the sequence is MPAEKDRKRGERIKVTNLRTPDEI.

This sequence belongs to the complex I 20 kDa subunit family. In terms of assembly, NDH-1 is composed of 14 different subunits. Subunits NuoB, C, D, E, F, and G constitute the peripheral sector of the complex. It depends on [4Fe-4S] cluster as a cofactor.

It is found in the cell inner membrane. It carries out the reaction a quinone + NADH + 5 H(+)(in) = a quinol + NAD(+) + 4 H(+)(out). Its function is as follows. NDH-1 shuttles electrons from NADH, via FMN and iron-sulfur (Fe-S) centers, to quinones in the respiratory chain. The immediate electron acceptor for the enzyme in this species is believed to be ubiquinone. Couples the redox reaction to proton translocation (for every two electrons transferred, four hydrogen ions are translocated across the cytoplasmic membrane), and thus conserves the redox energy in a proton gradient. This is NADH-quinone oxidoreductase subunit B from Aeromonas salmonicida (strain A449).